The chain runs to 448 residues: uncharacterized protein (448 aa).

At 1-50 the chain is on the extracellular side; that stretch reads MAPEIFVKFKCASRDIKLLWASVFLRLLSYGLTNQVLTLFLNAINMTEDK. A helical transmembrane segment spans residues 51–71; sequence IGLFMSLTLAGDVICSYILTW. Residues 72 to 93 lie on the Cytoplasmic side of the membrane; it reads YADSWGRRRVLVYGCAMMLLSG. A helical transmembrane segment spans residues 94–114; sequence LVFSFSENFTLLLVFAIFGVI. Topologically, residues 115 to 146 are extracellular; the sequence is SPSSDEVGPFKSIEEAMIAHLSPHNARPEIYA. The chain crosses the membrane as a helical span at residues 147 to 167; the sequence is IHALVGTIGSALGAIICGIFV. At 168 to 184 the chain is on the cytoplasmic side; that stretch reads DLLKRTGLAATDLQCYK. A helical transmembrane segment spans residues 185 to 205; it reads LVFLLYAFFAFCKMVIMLLLS. At 206-260 the chain is on the extracellular side; it reads DATELDGHYEHTDCNEETAEPLDVNDETAPLMRQATHPEERSNKLSKETVSVLMK. Residues 261–281 form a helical membrane-spanning segment; the sequence is LLVIFMVDSLGSGFMTSGWMV. At 282-287 the chain is on the cytoplasmic side; that stretch reads YYYSKQ. Residues 288 to 308 traverse the membrane as a helical segment; the sequence is FLMGSLALGTLFFITQLVMAS. Residues 309–333 lie on the Extracellular side of the membrane; that stretch reads STIPSSIIARCFGPVRATLLVQIPS. A helical transmembrane segment spans residues 334-354; that stretch reads GIFSILIPMAKNYLPLSILFL. Residues 355–386 lie on the Cytoplasmic side of the membrane; the sequence is NLHFATTAMDVTPRQILLTNIIKPRDLTKVMG. Residue 386–393 coordinates ATP; the sequence is GVVNIGKT. The helical transmembrane segment at 387-407 threads the bilayer; sequence VVNIGKTFARCVGPIFTGILA. Topologically, residues 408–416 are extracellular; it reads NNNYLWLCY. A helical transmembrane segment spans residues 417 to 437; it reads IISGSLVITADLILACMFLGV. Over 438 to 448 the chain is Cytoplasmic; sequence DAKIKKQMNRH.

Its subcellular location is the membrane. This is an uncharacterized protein from Saccharomyces cerevisiae (strain ATCC 204508 / S288c) (Baker's yeast).